A 156-amino-acid chain; its full sequence is Flagellar assembly factor FliW (156 aa).

It belongs to the FliW family. In terms of assembly, interacts with translational regulator CsrA and flagellin(s).

The protein localises to the cytoplasm. In terms of biological role, acts as an anti-CsrA protein, binds CsrA and prevents it from repressing translation of its target genes, one of which is flagellin. Binds to flagellin and participates in the assembly of the flagellum. In Pseudothermotoga lettingae (strain ATCC BAA-301 / DSM 14385 / NBRC 107922 / TMO) (Thermotoga lettingae), this protein is Flagellar assembly factor FliW.